A 261-amino-acid polypeptide reads, in one-letter code: Pimeloyl-[acyl-carrier protein] methyl ester esterase (261 aa).

The region spanning 15 to 243 (HLVLLHGWGL…AAHAPFISHP (229 aa)) is the AB hydrolase-1 domain. Substrate contacts are provided by residues tryptophan 22, 83 to 84 (SL), and 144 to 148 (FLALQ). Residue serine 83 is the Nucleophile of the active site. Active-site residues include aspartate 208 and histidine 236. Position 236 (histidine 236) interacts with substrate.

This sequence belongs to the AB hydrolase superfamily. Carboxylesterase BioH family. As to quaternary structure, monomer.

It localises to the cytoplasm. The catalysed reaction is 6-carboxyhexanoyl-[ACP] methyl ester + H2O = 6-carboxyhexanoyl-[ACP] + methanol + H(+). It participates in cofactor biosynthesis; biotin biosynthesis. In terms of biological role, the physiological role of BioH is to remove the methyl group introduced by BioC when the pimeloyl moiety is complete. It allows to synthesize pimeloyl-ACP via the fatty acid synthetic pathway through the hydrolysis of the ester bonds of pimeloyl-ACP esters. In Proteus mirabilis (strain HI4320), this protein is Pimeloyl-[acyl-carrier protein] methyl ester esterase.